We begin with the raw amino-acid sequence, 392 residues long: MEDVTLHIVERPYSGFPDASSEGPEPTQGEARATEEPSGTGSDELIKSDQVNGVLVLSLLDKIIGAVDQIQLTQAQLEERQAEMEGAVQSIQGELSKLGKAHATTSNTVSKLLEKVRKVSVNVKTVRGSLERQAGQIKKLEVNEAELLRRRNFKVMIYQDEVKLPAKLSVSKSLKESEALPEKEGDELGEGERPEDDTAAIELSSDEAVEVEEVIEESRAERIKRSGLRRVDDFKKAFSKEKMEKTKVRTRENLEKTRLKTKENLEKTRHTLEKRMNKLGTRLVPVERREKLKTSRDKLRKSFTPDHVVYARSKTAVYKVPPFTFHVKKIREGEVEVLKATEMVEVGPEDDEVGAERGEATDLLRGSSPDVHTLLEITEESDAVLVDKSDSD.

Met1 is subject to N-acetylmethionine. Residues 1–10 (MEDVTLHIVE) show a composition bias toward basic and acidic residues. Positions 1–45 (MEDVTLHIVERPYSGFPDASSEGPEPTQGEARATEEPSGTGSDEL) are disordered. Residues 1-100 (MEDVTLHIVE…IQGELSKLGK (100 aa)) are required for homotrimerization and for interaction with CAVIN2 and CAVIN3. 2 positions are modified to phosphoserine: Ser21 and Ser38. Phosphothreonine is present on Thr40. Phosphoserine occurs at positions 42 and 48. The segment at 54-64 (VLVLSLLDKII) is nuclear export signal. Positions 55-77 (LVLSLLDKIIGAVDQIQLTQAQL) are leucine-zipper 1. Lys118 participates in a covalent cross-link: Glycyl lysine isopeptide (Lys-Gly) (interchain with G-Cter in SUMO2). Residue Ser120 is modified to Phosphoserine. Residue Lys124 forms a Glycyl lysine isopeptide (Lys-Gly) (interchain with G-Cter in SUMO2) linkage. The segment at 138 to 154 (KKLEVNEAELLRRRNFK) is nuclear localization signal. Tyr158 is modified (phosphotyrosine). Residue Lys163 forms a Glycyl lysine isopeptide (Lys-Gly) (interchain with G-Cter in SUMO1); alternate linkage. Residue Lys163 forms a Glycyl lysine isopeptide (Lys-Gly) (interchain with G-Cter in SUMO2); alternate linkage. A Glycyl lysine isopeptide (Lys-Gly) (interchain with G-Cter in SUMO2) cross-link involves residue Lys167. A leucine-zipper 2 region spans residues 168-188 (LSVSKSLKESEALPEKEGDEL). Residues Ser169 and Ser171 each carry the phosphoserine modification. Lys172 is covalently cross-linked (Glycyl lysine isopeptide (Lys-Gly) (interchain with G-Cter in SUMO2)). Phosphoserine occurs at positions 173 and 177. Residues 173-183 (SLKESEALPEK) show a composition bias toward basic and acidic residues. The disordered stretch occupies residues 173-197 (SLKESEALPEKEGDELGEGERPEDD). The segment covering 184-197 (EGDELGEGERPEDD) has biased composition (acidic residues). Phosphothreonine is present on Thr198. A coiled-coil region spans residues 201 to 284 (IELSSDEAVE…RMNKLGTRLV (84 aa)). 2 positions are modified to phosphoserine: Ser204 and Ser205. A nuclear localization signal region spans residues 235–251 (KKAFSKEKMEKTKVRTR). Positions 259-299 (LKTKENLEKTRHTLEKRMNKLGTRLVPVERREKLKTSRDKL) are leucine-zipper 3. Ser302 bears the Phosphoserine mark. Thr304 carries the post-translational modification Phosphothreonine. Residue Tyr310 is modified to Phosphotyrosine. Residue Lys328 forms a Glycyl lysine isopeptide (Lys-Gly) (interchain with G-Cter in SUMO2) linkage. The disordered stretch occupies residues 347-367 (GPEDDEVGAERGEATDLLRGS). Residues Ser367, Ser368, Ser381, Ser389, and Ser391 each carry the phosphoserine modification.

The protein belongs to the CAVIN family. As to quaternary structure, component of the CAVIN complex composed of CAVIN1, CAVIN2, CAVIN3 and CAVIN4. Homotrimer. Interacts with LIPE in the adipocyte cytoplasm. Interacts with RNA polymerase I subunit POLR1A/RPA1. Interacts with TTF1. Binds the 3' end of pre-rRNA. Interacts with transcription factor ZNF148. Interacts with CAV1, CAVIN2 and CAVIN3. Interacts with CAVIN4. Phosphorylated. Present in active and inactive forms. Changes in phosphorylation pattern may alter activity. Phosphorylation at Tyr-158 is essential for its function in the regulation of the ribosomal transcriptional activity. Post-translationally, monoubiquitinated. Expressed in the heart, stomach, adipose tissue and lung (at protein level). Expressed in testis, kidney, muscle, liver, spleen and brain.

It localises to the membrane. Its subcellular location is the caveola. The protein resides in the cell membrane. It is found in the microsome. The protein localises to the endoplasmic reticulum. It localises to the cytoplasm. Its subcellular location is the cytosol. The protein resides in the mitochondrion. It is found in the nucleus. In terms of biological role, plays an important role in caveolae formation and organization. Essential for the formation of caveolae in all tissues. Core component of the CAVIN complex which is essential for recruitment of the complex to the caveolae in presence of calveolin-1 (CAV1). Essential for normal oligomerization of CAV1. Promotes ribosomal transcriptional activity in response to metabolic challenges in the adipocytes and plays an important role in the formation of the ribosomal transcriptional loop. Dissociates transcription complexes paused by DNA-bound TTF1, thereby releasing both RNA polymerase I and pre-RNA from the template. The caveolae biogenesis pathway is required for the secretion of proteins such as GASK1A. This Mus musculus (Mouse) protein is Caveolae-associated protein 1 (Cavin1).